The following is a 200-amino-acid chain: Acyl-homoserine-lactone synthase (200 aa).

The protein belongs to the autoinducer synthase family.

The enzyme catalyses a fatty acyl-[ACP] + S-adenosyl-L-methionine = an N-acyl-L-homoserine lactone + S-methyl-5'-thioadenosine + holo-[ACP] + H(+). Functionally, required for the synthesis of BHL (N-butanoyl-L-homoserine lactone). The polypeptide is Acyl-homoserine-lactone synthase (swrI) (Serratia liquefaciens).